A 162-amino-acid polypeptide reads, in one-letter code: Selenoprotein F (162 aa).

Positions 1-28 (MAARRDGWLGPAFGLRLLLATVLQTVSA) are cleaved as a signal peptide. Residue U93 is a non-standard amino acid, selenocysteine.

The protein belongs to the selenoprotein M/F family. As to quaternary structure, forms a tight complex with UGGT1/UGCGL1. Interacts with UGGT2/UGCGL2. Interacts with RDH11.

Its subcellular location is the endoplasmic reticulum lumen. May be involved in redox reactions associated with the formation of disulfide bonds. May contribute to the quality control of protein folding in the endoplasmic reticulum. May regulate protein folding by enhancing the catalytic activity of UGGT1/UGCGL1 and UGGT2/UGCGL2. The sequence is that of Selenoprotein F from Bos taurus (Bovine).